The chain runs to 71 residues: Large ribosomal subunit protein uL29 (71 aa).

It belongs to the universal ribosomal protein uL29 family.

The polypeptide is Large ribosomal subunit protein uL29 (rpl29) (Aeropyrum pernix (strain ATCC 700893 / DSM 11879 / JCM 9820 / NBRC 100138 / K1)).